The primary structure comprises 207 residues: Large ribosomal subunit protein uL3 (207 aa).

This sequence belongs to the universal ribosomal protein uL3 family. Part of the 50S ribosomal subunit. Forms a cluster with proteins L14 and L19.

One of the primary rRNA binding proteins, it binds directly near the 3'-end of the 23S rRNA, where it nucleates assembly of the 50S subunit. The protein is Large ribosomal subunit protein uL3 of Desulforapulum autotrophicum (strain ATCC 43914 / DSM 3382 / VKM B-1955 / HRM2) (Desulfobacterium autotrophicum).